A 460-amino-acid chain; its full sequence is Cysteine--tRNA ligase (460 aa).

Cys28 provides a ligand contact to Zn(2+). The 'HIGH' region signature appears at 30–40; it reads MTVYDYCHLGH. Zn(2+) is bound by residues Cys209, His234, and Glu238. Positions 266–270 match the 'KMSKS' region motif; the sequence is KMSKS. Residue Lys269 coordinates ATP.

The protein belongs to the class-I aminoacyl-tRNA synthetase family. Monomer. Zn(2+) is required as a cofactor.

The protein resides in the cytoplasm. The enzyme catalyses tRNA(Cys) + L-cysteine + ATP = L-cysteinyl-tRNA(Cys) + AMP + diphosphate. The protein is Cysteine--tRNA ligase of Pseudomonas entomophila (strain L48).